Consider the following 513-residue polypeptide: Glutamyl-tRNA(Gln) amidotransferase subunit B, mitochondrial (513 aa).

It belongs to the GatB/GatE family. GatB subfamily. Subunit of the heterotrimeric GatFAB amidotransferase (AdT) complex, composed of A, B and F subunits.

Its subcellular location is the mitochondrion. It catalyses the reaction L-glutamyl-tRNA(Gln) + L-glutamine + ATP + H2O = L-glutaminyl-tRNA(Gln) + L-glutamate + ADP + phosphate + H(+). Functionally, allows the formation of correctly charged Gln-tRNA(Gln) through the transamidation of misacylated Glu-tRNA(Gln) in the mitochondria. The reaction takes place in the presence of glutamine and ATP through an activated gamma-phospho-Glu-tRNA(Gln). The chain is Glutamyl-tRNA(Gln) amidotransferase subunit B, mitochondrial from Debaryomyces hansenii (strain ATCC 36239 / CBS 767 / BCRC 21394 / JCM 1990 / NBRC 0083 / IGC 2968) (Yeast).